Here is a 211-residue protein sequence, read N- to C-terminus: Bifunctional transcriptional activator/DNA repair enzyme AdaA (211 aa).

The active-site Nucleophile; methyl group acceptor from methylphosphotriester is Cys-54. Positions 54, 58, 85, and 88 each coordinate Zn(2+). The HTH araC/xylS-type domain maps to 102–200 (DLITEYIDKN…GQTPARFRQM (99 aa)). A DNA-binding region (H-T-H motif) is located at residues 119 to 140 (ESLADICHGSPYHMHRTFKKIK).

Requires Zn(2+) as cofactor.

It catalyses the reaction (2'-deoxyribonucleoside 5'-methylphosphotriester)-DNA + L-cysteinyl-[protein] = 2'-deoxyribonucleotide-DNA + S-methyl-L-cysteinyl-[protein] + H(+). In terms of biological role, is involved in the adaptive response to alkylation damage in DNA caused by alkylating agents. Repairs the methylphosphotriester lesions in DNA by a direct and irreversible transfer of the methyl group to one of its own cysteine residues. The methylation of AdaA by methylphosphotriesters in DNA leads to its activation as a transcriptional regulator that activates the transcription of the ada operon which consists of adaA and adaB, and of the adjacent gene alkA. The sequence is that of Bifunctional transcriptional activator/DNA repair enzyme AdaA (adaA) from Bacillus subtilis (strain 168).